The following is a 680-amino-acid chain: Transketolase 1 (680 aa).

Position 30 (His30) interacts with substrate. Thiamine diphosphate-binding positions include His69 and 116–118; that span reads GPL. Mg(2+) is bound at residue Asp157. Positions 158 and 187 each coordinate thiamine diphosphate. Mg(2+) contacts are provided by Asn187 and Ile189. A substrate-binding site is contributed by His263. His263 contacts thiamine diphosphate. A phosphoserine mark is found at Ser286 and Ser335. Residues Arg359 and Ser386 each coordinate substrate. Ser402 is modified (phosphoserine). The thiamine diphosphate site is built by Glu418 and Phe445. Residue Glu418 is the Proton donor of the active site. His469 and Asp477 together coordinate substrate. Ser492 is modified (phosphoserine). Substrate is bound at residue Arg528. Lys647 participates in a covalent cross-link: Glycyl lysine isopeptide (Lys-Gly) (interchain with G-Cter in ubiquitin).

This sequence belongs to the transketolase family. Homodimer. The cofactor is Mg(2+). Requires Ca(2+) as cofactor. It depends on Mn(2+) as a cofactor. Co(2+) is required as a cofactor. Thiamine diphosphate serves as cofactor.

The catalysed reaction is D-sedoheptulose 7-phosphate + D-glyceraldehyde 3-phosphate = aldehydo-D-ribose 5-phosphate + D-xylulose 5-phosphate. Its function is as follows. Catalyzes the transfer of a two-carbon ketol group from a ketose donor to an aldose acceptor, via a covalent intermediate with the cofactor thiamine pyrophosphate. In Saccharomyces cerevisiae (strain ATCC 204508 / S288c) (Baker's yeast), this protein is Transketolase 1 (TKL1).